The primary structure comprises 1072 residues: MAVINKAGNVIALLLVKLQLILLFTLSVSGELPQLDYGSLSASLEEDAIDPLTAMAPFANSLVTEESAQHKNNAELLGNSSEDENVRPQQGSSSSGLGSSGAAGGSGILLEEFNSGKLSPGEASNTLPIFLIEPESVFVVKNRPAVLKCKASHSLQVIFKCSGSSQPPPSTHETHVDPHTGVNMEEVTATIHRDLVDEFFGDGPFKCECHAWSSRGVVKSQAATVHIAYIRKSFNQSPTSLRLELGSRAELRCEPPGGFPEPKLTWHKNNAVITADSEPGITVSAGTLIFRQVALQHMANYSCSAENIAGRRVSDSAVLIVYVNGGWSTWSPWRECKCAGKPSQGRKRSRTCNNPMPLNGGAQCPGPQIQKSADCAACPEDTQIVSPDGFDISSSKRMARWSAWSDWSICSAECIQVRRRKCLTQGQTQISSEAEEAGDLLLGAPGVGMAALIAAAGVGAVGSPSEATGSSSDIIPGYGKSLCAGKDIQTAECRGEQCQIGKDDFDWTLYLGLAFITAVCFAFGTALICCARRGIRTNPHYNMARSVMDADYMPGVVEKKEMRMHIEASNMGYDYVNPGHRYLPGEHIMGMGIGCGGVTEHHYDVPNLSANYTNPIDHLSVDYLSETGESSTADTSNSTFDMNGKLSILNASKSSTYEMLGSAGGQLRLYGGELLLFVPEHAIGKHVKKHVSLLLLSDECSRVSCATESSILCSSVVHSAPRNYSFVKPVILKIPHCLVAPEQWHVHIYHADSEHDELSVNWRRAVSVGEETINTPMFVQLEATHVFIMTEQLGHFTVVAEPRIQQPSIKMKLLAFSQHTPPSNANCSLRIYVVKDFPNSRDICANVEAKLGGSFLGESQVFAFTLNSRNLNIRVRSADVEAAAPYEHAIPYQHILSNNSILHCEFSLRRQDQNSLCVDFGQGSEDDYYTFNIPAHSMSGSAEELASTTNTTISIDRQGNYVNESCVMDFVQLPHATKRLICGALDPPRADERDWRLLAKKLNTDRYIAYFATKASPTEQILNLWECRANSSPGSSSNSVSHTIMALLLTLKEMGRQDVLDIIVETIGPLWI.

The signal sequence occupies residues 1–30 (MAVINKAGNVIALLLVKLQLILLFTLSVSG). Topologically, residues 31-440 (ELPQLDYGSL…SSEAEEAGDL (410 aa)) are extracellular. The interval 77-100 (LGNSSEDENVRPQQGSSSSGLGSS) is disordered. N79 carries N-linked (GlcNAc...) asparagine glycosylation. The 97-residue stretch at 128–224 (PIFLIEPESV…RGVVKSQAAT (97 aa)) folds into the Ig-like domain. Intrachain disulfides connect C149/C207, C253/C303, C336/C375, C338/C378, and C352/C364. In terms of domain architecture, Ig-like C2-type spans 232–314 (KSFNQSPTSL…AENIAGRRVS (83 aa)). The N-linked (GlcNAc...) asparagine glycan is linked to N300. 2 consecutive TSP type-1 domains span residues 324–379 (NGGW…AACP) and 398–499 (MARW…EQCQ). Residues 441–461 (LLGAPGVGMAALIAAAGVGAV) traverse the membrane as a helical segment. The Cytoplasmic segment spans residues 462–1072 (GSPSEATGSS…IVETIGPLWI (611 aa)). In terms of domain architecture, ZU5 spans 654 to 802 (SSTYEMLGSA…LGHFTVVAEP (149 aa)). The Death domain occupies 980-1067 (LICGALDPPR…DVLDIIVETI (88 aa)).

Belongs to the unc-5 family. Post-translationally, phosphorylated on different cytoplasmic tyrosine residues. In terms of tissue distribution, prior to gastrulation, it is strongly expressed in the presumptive mesoderm. Mesodermal expression begins to fade during stages 13-14, persisting only in the cells that form the dorsal vessel. Expressed within the CNS from late stage 13, shortly after the first axons have extended. Detected in several dispersed clusters of cells within the CNS, increasing in number as development proceeds. Also expressed in the peripheral and exit glia, which migrate laterally out of the CNS between stages 14 and 17. Strongly expressed in motor axons that exit the CNS ipsilaterally via the segmental nerve root (SN). Not expressed on either commissural or longitudinal axons within the CNS, nor on motor axons that exit via the intersegmental nerve (ISN). In the periphery, it is detected on all branches of the SN. Also expressed at high level in exit and peripheral glia along both the SN and ISN.

It is found in the membrane. Receptor for netrin required for motor axon guidance. Mediates both short- and long-range axon motor repulsion in the developing nervous system upon ligand binding. Also involved in glial migration. While short-range repulsion requires both fra and unc-5, long-range repulsion only requires unc-5. The chain is Netrin receptor unc-5 (unc-5) from Drosophila melanogaster (Fruit fly).